We begin with the raw amino-acid sequence, 255 residues long: Phycoerythrobilin:ferredoxin oxidoreductase (255 aa).

It belongs to the HY2 family.

The catalysed reaction is (3Z)-phycoerythrobilin + oxidized 2[4Fe-4S]-[ferredoxin] = 15,16-dihydrobiliverdin + reduced 2[4Fe-4S]-[ferredoxin] + 2 H(+). Catalyzes the two-electron reduction of the C2 and C3(1) diene system of 15,16-dihydrobiliverdin. This is Phycoerythrobilin:ferredoxin oxidoreductase (pebB) from Nostoc punctiforme (strain ATCC 29133 / PCC 73102).